The following is a 320-amino-acid chain: Olfactory receptor 12D1 (320 aa).

Residues 1–23 (MLNTTSVTEFLLLGVTDIQELQP) lie on the Extracellular side of the membrane. The N-linked (GlcNAc...) asparagine glycan is linked to N3. The chain crosses the membrane as a helical span at residues 24–44 (FLFVVFLTIYFISVAGNGAIL). Topologically, residues 45–55 (MIVISDPRLHS) are cytoplasmic. Residues 56–76 (PMYFFLGNLSCLDICYSSVTL) traverse the membrane as a helical segment. Residues 77 to 97 (PKMLQNFLSAHKAISFLGCIS) are Extracellular-facing. An intrachain disulfide couples C95 to C177. The chain crosses the membrane as a helical span at residues 98–118 (QLHFFHFLGSTEAMLLAVMAF). Residues 119-141 (DRFVAICKPLRYTVIMNPQLCTQ) are Cytoplasmic-facing. Residues 142–162 (MAITIWMIGFFHALLHSLMTS) form a helical membrane-spanning segment. The Extracellular segment spans residues 163-203 (RLNFCGSNRIYHFFCDVKPLLKLACGNTELNQWLLSTVTGT). Residues 204 to 224 (IAMGPFFLTLLSYFYIITHLF) traverse the membrane as a helical segment. The Cytoplasmic portion of the chain corresponds to 225–238 (FKTHSFSMLRKALS). A helical transmembrane segment spans residues 239–259 (TCASHFMVVILLYAPVLFTYI). Residues 260–270 (HHASGTSMDQD) lie on the Extracellular side of the membrane. The helical transmembrane segment at 271–291 (RITAIMYTVVTPVLNPLIYTL) threads the bilayer. Over 292–320 (RNKEVKGAFNRAMKRWLWPKEILKNSSEA) the chain is Cytoplasmic.

Belongs to the G-protein coupled receptor 1 family.

It localises to the cell membrane. Odorant receptor. In Homo sapiens (Human), this protein is Olfactory receptor 12D1 (OR12D1).